A 418-amino-acid chain; its full sequence is UDP-N-acetylglucosamine 1-carboxyvinyltransferase (418 aa).

22 to 23 (KN) is a binding site for phosphoenolpyruvate. Residue Arg-92 participates in UDP-N-acetyl-alpha-D-glucosamine binding. Cys-116 serves as the catalytic Proton donor. Position 116 is a 2-(S-cysteinyl)pyruvic acid O-phosphothioketal (Cys-116). Residues 121–125 (RPVDL), Asp-305, and Ile-327 each bind UDP-N-acetyl-alpha-D-glucosamine.

The protein belongs to the EPSP synthase family. MurA subfamily.

It localises to the cytoplasm. It carries out the reaction phosphoenolpyruvate + UDP-N-acetyl-alpha-D-glucosamine = UDP-N-acetyl-3-O-(1-carboxyvinyl)-alpha-D-glucosamine + phosphate. The protein operates within cell wall biogenesis; peptidoglycan biosynthesis. Cell wall formation. Adds enolpyruvyl to UDP-N-acetylglucosamine. This Acidiphilium cryptum (strain JF-5) protein is UDP-N-acetylglucosamine 1-carboxyvinyltransferase.